The following is a 546-amino-acid chain: Pectinesterase 1 (546 aa).

The signal sequence occupies residues 1–39; that stretch reads MANPQQPLLIKTHKQNPIISFKILSFVITLFVALFLVAP. Positions 40-229 are excised as a propeptide; it reads YQVEIKHSNL…RKLMESSGKD (190 aa). Substrate-binding residues include T308 and Q338. A disulfide bond links C327 and C354. Catalysis depends on D361, which acts as the Proton donor. D382 functions as the Nucleophile in the catalytic mechanism. An intrachain disulfide couples C395 to C429. Positions 450 and 452 each coordinate substrate.

This sequence in the N-terminal section; belongs to the PMEI family. It in the C-terminal section; belongs to the pectinesterase family.

The protein resides in the secreted. It is found in the cell wall. The enzyme catalyses [(1-&gt;4)-alpha-D-galacturonosyl methyl ester](n) + n H2O = [(1-&gt;4)-alpha-D-galacturonosyl](n) + n methanol + n H(+). It functions in the pathway glycan metabolism; pectin degradation; 2-dehydro-3-deoxy-D-gluconate from pectin: step 1/5. Pectinesterase may play a role in cell wall metabolism during fruit growth and development prior to ripening and may be required for preparing cell walls for softening by polygalacturonase during fruit ripening. The polypeptide is Pectinesterase 1 (PME1.9) (Solanum lycopersicum (Tomato)).